Reading from the N-terminus, the 486-residue chain is RAC-beta serine/threonine-protein kinase A (486 aa).

Residues 5-110 enclose the PH domain; sequence MVIKEGWLQK…WIIAIQTVAN (106 aa). O-linked (GlcNAc) serine glycans are attached at residues Ser133 and Ser136. A Protein kinase domain is found at 157 to 414; that stretch reads FDYLKLLGKG…AQEVMSHRFF (258 aa). ATP is bound by residues 163 to 171 and Lys186; that span reads LGKGTFGKV. The Proton acceptor role is filled by Asp280. The O-linked (GlcNAc) threonine glycan is linked to Thr311. A Phosphothreonine modification is found at Thr314. A glycan (O-linked (GlcNAc) threonine) is linked at Thr318. The AGC-kinase C-terminal domain occupies 415–486; the sequence is VSINWQDVTE…QFSYSASIRE (72 aa). Positions 455-486 are disordered; sequence LTPPDRYDNLDALESDQRPHFPQFSYSASIRE. Residues 459–473 show a composition bias toward basic and acidic residues; sequence DRYDNLDALESDQRP. Ser479 is modified (phosphoserine). Ser479 is a glycosylation site (O-linked (GlcNAc) serine; alternate).

The protein belongs to the protein kinase superfamily. AGC Ser/Thr protein kinase family. RAC subfamily. In terms of processing, phosphorylation on Thr-314 and Ser-479 is required for full activity. Phosphorylation of the activation loop at Thr-314 by PDPK1/PDK1 is a prerequisite for full activation. Phosphorylation by mTORC2 at Ser-479 in response to growth factors plays a key role in AKT1 activation by facilitating subsequent phosphorylation of the activation loop by PDPK1/PDK1.

It catalyses the reaction L-seryl-[protein] + ATP = O-phospho-L-seryl-[protein] + ADP + H(+). The catalysed reaction is L-threonyl-[protein] + ATP = O-phospho-L-threonyl-[protein] + ADP + H(+). With respect to regulation, two specific sites, one in the kinase domain (Thr-314) and the other in the C-terminal regulatory region (Ser-479), need to be phosphorylated for its full activation. In terms of biological role, akt2-a is one of several closely related serine/threonine-protein kinases known as the AKT kinase, and which regulate many processes including metabolism, proliferation, cell survival, growth and angiogenesis. This is mediated through serine and/or threonine phosphorylation of a range of downstream substrates. Over 100 substrate candidates have been reported so far, but for most of them, no isoform specificity has been reported. May be involved in the inhibition of ciliogenesis. The protein is RAC-beta serine/threonine-protein kinase A (akt2-a) of Xenopus laevis (African clawed frog).